Consider the following 181-residue polypeptide: Regulator of G-protein signaling 10 (181 aa).

A disordered region spans residues 1–35 (MFTRAVSRLSRKRPPSDIHDGDGSSSSGHQSLKST). A phosphoserine mark is found at serine 24 and serine 41. Positions 41 to 156 (SLENLLEDPE…LKSDLFLKPK (116 aa)) constitute an RGS domain. A lipid anchor (S-palmitoyl cysteine) is attached at cysteine 74. The interval 155–181 (PKRTEEEEEEPPDAQTAAKRASRIYNT) is disordered. Serine 176 is subject to Phosphoserine.

In terms of assembly, interacts with GNAZ, GNAI1 and GNAI3. Associates specifically with the activated, GTP-bound forms of GNAZ and GNAI3.

It localises to the cytoplasm. The protein resides in the cytosol. It is found in the nucleus. Regulates G protein-coupled receptor signaling cascades, including signaling downstream of the muscarinic acetylcholine receptor CHRM2. Inhibits signal transduction by increasing the GTPase activity of G protein alpha subunits, thereby driving them into their inactive GDP-bound form. Modulates the activity of potassium channels that are activated in response to CHRM2 signaling. Activity on GNAZ is inhibited by palmitoylation of the G-protein. The protein is Regulator of G-protein signaling 10 (Rgs10) of Mus musculus (Mouse).